We begin with the raw amino-acid sequence, 280 residues long: Bifunctional protein FolD (280 aa).

Residues 166–168 and Ser-191 each bind NADP(+); that span reads GRS.

It belongs to the tetrahydrofolate dehydrogenase/cyclohydrolase family. Homodimer.

It carries out the reaction (6R)-5,10-methylene-5,6,7,8-tetrahydrofolate + NADP(+) = (6R)-5,10-methenyltetrahydrofolate + NADPH. It catalyses the reaction (6R)-5,10-methenyltetrahydrofolate + H2O = (6R)-10-formyltetrahydrofolate + H(+). The protein operates within one-carbon metabolism; tetrahydrofolate interconversion. Its function is as follows. Catalyzes the oxidation of 5,10-methylenetetrahydrofolate to 5,10-methenyltetrahydrofolate and then the hydrolysis of 5,10-methenyltetrahydrofolate to 10-formyltetrahydrofolate. This is Bifunctional protein FolD from Saccharophagus degradans (strain 2-40 / ATCC 43961 / DSM 17024).